The sequence spans 718 residues: Nucleolar protein 11 (718 aa).

Position 346 is an N6-methyllysine (Lys346).

In terms of assembly, interacts with UTP4. Interacts with FBL/fibrillarin in a transcription-dependent manner. May associate with the proposed t-UTP subcomplex of the SSU processome containing at least UTP4, WDR43, HEATR1, UTP15, WDR75.

The protein localises to the nucleus. It localises to the nucleolus. Its function is as follows. Ribosome biogenesis factor. May be required for both optimal rDNA transcription and small subunit (SSU) pre-rRNA processing at sites A', A0, 1 and 2b. This Bos taurus (Bovine) protein is Nucleolar protein 11 (NOL11).